We begin with the raw amino-acid sequence, 258 residues long: Thiazole synthase (258 aa).

The Schiff-base intermediate with DXP role is filled by Lys-97. 1-deoxy-D-xylulose 5-phosphate-binding positions include Gly-158, 184–185 (AG), and 206–207 (NT).

The protein belongs to the ThiG family. In terms of assembly, homotetramer. Forms heterodimers with either ThiH or ThiS.

The protein resides in the cytoplasm. It carries out the reaction [ThiS sulfur-carrier protein]-C-terminal-Gly-aminoethanethioate + 2-iminoacetate + 1-deoxy-D-xylulose 5-phosphate = [ThiS sulfur-carrier protein]-C-terminal Gly-Gly + 2-[(2R,5Z)-2-carboxy-4-methylthiazol-5(2H)-ylidene]ethyl phosphate + 2 H2O + H(+). Its pathway is cofactor biosynthesis; thiamine diphosphate biosynthesis. In terms of biological role, catalyzes the rearrangement of 1-deoxy-D-xylulose 5-phosphate (DXP) to produce the thiazole phosphate moiety of thiamine. Sulfur is provided by the thiocarboxylate moiety of the carrier protein ThiS. In vitro, sulfur can be provided by H(2)S. The sequence is that of Thiazole synthase from Bacteroides fragilis (strain ATCC 25285 / DSM 2151 / CCUG 4856 / JCM 11019 / LMG 10263 / NCTC 9343 / Onslow / VPI 2553 / EN-2).